A 207-amino-acid chain; its full sequence is FMN-dependent NADH:quinone oxidoreductase 2 (207 aa).

FMN is bound by residues Ser-10, 16 to 18, 96 to 99, and 141 to 144; these read SIS, MYNL, and SRGG.

Belongs to the azoreductase type 1 family. As to quaternary structure, homodimer. It depends on FMN as a cofactor.

The enzyme catalyses 2 a quinone + NADH + H(+) = 2 a 1,4-benzosemiquinone + NAD(+). It catalyses the reaction N,N-dimethyl-1,4-phenylenediamine + anthranilate + 2 NAD(+) = 2-(4-dimethylaminophenyl)diazenylbenzoate + 2 NADH + 2 H(+). Functionally, quinone reductase that provides resistance to thiol-specific stress caused by electrophilic quinones. In terms of biological role, also exhibits azoreductase activity. Catalyzes the reductive cleavage of the azo bond in aromatic azo compounds to the corresponding amines. The chain is FMN-dependent NADH:quinone oxidoreductase 2 from Trichormus variabilis (strain ATCC 29413 / PCC 7937) (Anabaena variabilis).